The primary structure comprises 192 residues: Pyruvate synthase subunit PorC (192 aa).

Heterotetramer of one alpha, one beta, one delta and one gamma chain.

The enzyme catalyses 2 oxidized [2Fe-2S]-[ferredoxin] + pyruvate + CoA = 2 reduced [2Fe-2S]-[ferredoxin] + acetyl-CoA + CO2 + H(+). This Thermotoga maritima (strain ATCC 43589 / DSM 3109 / JCM 10099 / NBRC 100826 / MSB8) protein is Pyruvate synthase subunit PorC (porC).